Here is a 477-residue protein sequence, read N- to C-terminus: Homospermidine synthase (477 aa).

Belongs to the saccharopine dehydrogenase family. As to quaternary structure, homodimer. It depends on NAD(+) as a cofactor.

The enzyme catalyses 2 putrescine = sym-homospermidine + NH4(+). It carries out the reaction putrescine + spermidine = sym-homospermidine + propane-1,3-diamine. Its function is as follows. Involved in the NAD(+)-dependent synthesis of the polyamine homospermidine from putrescine. This is Homospermidine synthase (hss) from Blastochloris viridis (Rhodopseudomonas viridis).